Here is a 179-residue protein sequence, read N- to C-terminus: MIP18 family protein C144.16 (179 aa).

The disordered stretch occupies residues 1–26; it reads MSANLQNENPEVKELNQLPSRVEEEE.

It belongs to the MIP18 family.

May play a role in chromosome segregation through establishment of sister chromatid cohesion. This chain is MIP18 family protein C144.16, found in Schizosaccharomyces pombe (strain 972 / ATCC 24843) (Fission yeast).